The primary structure comprises 63 residues: Overexpressed in colon carcinoma 1 protein homolog (63 aa).

The span at 1–10 shows a compositional bias: polar residues; that stretch reads MGCGNSTATS. The tract at residues 1 to 37 is disordered; it reads MGCGNSTATSAAAGRGKPGAVKDATEDSITEDDKRRN.

The protein belongs to the OCC1 family.

The polypeptide is Overexpressed in colon carcinoma 1 protein homolog (Rattus norvegicus (Rat)).